The chain runs to 518 residues: Tyrosine/DOPA decarboxylase 1 (518 aa).

N6-(pyridoxal phosphate)lysine is present on K321.

Belongs to the group II decarboxylase family. As to quaternary structure, homodimer. Pyridoxal 5'-phosphate is required as a cofactor. Predominantly expressed in the roots.

It carries out the reaction L-tyrosine + H(+) = tyramine + CO2. The enzyme catalyses L-dopa + H(+) = dopamine + CO2. The catalysed reaction is 5-hydroxy-L-tryptophan + H(+) = serotonin + CO2. Functionally, marginally higher substrate specificity for L-DOPA over L-tyrosine. In Papaver somniferum (Opium poppy), this protein is Tyrosine/DOPA decarboxylase 1 (TYDC1).